Consider the following 563-residue polypeptide: PTS system fructose-specific EIIB'BC component (563 aa).

PTS EIIB type-2 domains follow at residues 1-85 (MKTL…KGHA) and 104-201 (KRVV…KAVA). Cysteine 112 (phosphocysteine intermediate; for EIIB activity) is an active-site residue. At cysteine 112 the chain carries Phosphocysteine; by EIIA. In terms of domain architecture, PTS EIIC type-2 spans 226-561 (AYRHLLTGVS…KRPEVDAVAK (336 aa)). 9 helical membrane-spanning segments follow: residues 236 to 256 (YMLP…AFGI), 274 to 294 (GGSA…FSIA), 304 to 324 (IGGM…IAGF), 349 to 369 (ILII…YLIG), 382 to 402 (WLQT…GGMM), 430 to 450 (MAAI…ATMV), 463 to 483 (GKAA…PFAA), 489 to 509 (VLPC…AIGA), and 518 to 538 (LFVL…VAII).

The protein localises to the cell inner membrane. It catalyses the reaction D-fructose(out) + N(pros)-phospho-L-histidyl-[protein] = D-fructose 1-phosphate(in) + L-histidyl-[protein]. In terms of biological role, the phosphoenolpyruvate-dependent sugar phosphotransferase system (sugar PTS), a major carbohydrate active transport system, catalyzes the phosphorylation of incoming sugar substrates concomitantly with their translocation across the cell membrane. The enzyme II FruAB PTS system is involved in fructose transport. The polypeptide is PTS system fructose-specific EIIB'BC component (Escherichia coli (strain K12)).